The primary structure comprises 579 residues: Thiol:disulfide interchange protein DsbD (579 aa).

The first 16 residues, 1–16 (MKKLFLFFTLIFTAFA), serve as a signal peptide directing secretion. Intrachain disulfides connect C124/C129 and C193/C315. Transmembrane regions (helical) follow at residues 178-198 (IFGF…LPML), 230-250 (LTYT…QIAL), 254-274 (YVMI…FGLF), 296-316 (GAFG…SPCT), 337-357 (AVTL…ITLF), 376-396 (FGFV…PEVW), 397-417 (ESRL…LQMS), and 420-440 (GFGY…VQPL). A Thioredoxin domain is found at 449–579 (TTTQSAVENM…AFSNWIEKLL (131 aa)). Cysteines 495 and 498 form a disulfide.

Belongs to the thioredoxin family. DsbD subfamily.

Its subcellular location is the cell inner membrane. The catalysed reaction is [protein]-dithiol + NAD(+) = [protein]-disulfide + NADH + H(+). It carries out the reaction [protein]-dithiol + NADP(+) = [protein]-disulfide + NADPH + H(+). In terms of biological role, required to facilitate the formation of correct disulfide bonds in some periplasmic proteins and for the assembly of the periplasmic c-type cytochromes. Acts by transferring electrons from cytoplasmic thioredoxin to the periplasm. This transfer involves a cascade of disulfide bond formation and reduction steps. The sequence is that of Thiol:disulfide interchange protein DsbD from Haemophilus influenzae (strain PittGG).